A 415-amino-acid chain; its full sequence is Casein kinase I isoform delta (415 aa).

Positions 9–277 (YRLGRKIGSG…YLRQLFRNLF (269 aa)) constitute a Protein kinase domain. Residues 15-23 (IGSGSFGDI) and Lys38 contribute to the ATP site. Asp128 (proton acceptor) is an active-site residue. Positions 301–315 (AEDAERERREREERL) are enriched in basic and acidic residues. The disordered stretch occupies residues 301–415 (AEDAERERRE…SSGLPSTVHR (115 aa)). The interval 317–342 (HTRNPAVRGLPSTASGRLRGTQEVTP) is autoinhibitory. The span at 341-352 (TPSTPLTPTSHT) shows a compositional bias: low complexity. Polar residues predominate over residues 380 to 415 (NVSSSDLTSRQDTSRMSTSQIPSRVTSSGLPSTVHR).

It belongs to the protein kinase superfamily. Monomer. Interacts with per1 and per2. Component of the circadian core oscillator. Autophosphorylated on serine and threonine residues. In terms of tissue distribution, detected in retina photoreceptor cells.

It localises to the cytoplasm. The protein localises to the nucleus. The enzyme catalyses L-seryl-[protein] + ATP = O-phospho-L-seryl-[protein] + ADP + H(+). It carries out the reaction L-threonyl-[protein] + ATP = O-phospho-L-threonyl-[protein] + ADP + H(+). It catalyses the reaction L-seryl-[tau protein] + ATP = O-phospho-L-seryl-[tau protein] + ADP + H(+). The catalysed reaction is L-threonyl-[tau protein] + ATP = O-phospho-L-threonyl-[tau protein] + ADP + H(+). With respect to regulation, exhibits substrate-dependent heparin activation. Functionally, casein kinases are operationally defined by their preferential utilization of acidic proteins such as caseins as substrates. Can phosphorylate a large number of proteins. Central component of the circadian clock. May act as a negative regulator of circadian rhythmicity by phosphorylating per1 and per2, which may lead to their degradation. Participates in wnt signaling. Has no kinase activity. The protein is Casein kinase I isoform delta (csnk1d) of Xenopus laevis (African clawed frog).